The chain runs to 182 residues: Functional amyloid subunit FapB (182 aa).

Positions 1–18 (MTHSWLLLTVLGCSAAMA) are cleaved as a signal peptide. A FapB_R1 repeat occupies 22–58 (NQALIDNAGKQYTGVLSVNQAAGNQHQQINSRAISLG). One copy of the FapB_R2 repeat lies at 80–114 (SAAIQGSAFSNGNGILGVNQSAGANNQMINAVRIS). A FapB_R3 repeat occupies 150–180 (SDQAFTGSRGVVQVNQSAGVGNRMANTLGVT).

The protein belongs to the FapB/FapC family. Forms fibrils in vitro; in the presence of FapA the fibrils are slightly narrower. A minor component of purified amyloid fibrils. Fibrils are resistant to boiling in 2% (weight/vol) SDS and require &gt;90% (vol/vol) formic acid to dissolve.

The protein resides in the fimbrium. Its subcellular location is the secreted. In terms of biological role, a minor component of the functional amyloid in this bacterium. Probably nucleates fibril formation; FapB nucleates fibrillation its own, FapA inhibits FapB fibril elongation. Upon overexpression of the endogenous six-gene locus (fapA-fapF) in situ, cells form large clumps during liquid growth, make large amounts of biofilm and produce amyloid fibrils. Expression of the 6 gene operon in E.coli strain BL21(DE3) induces flocculation and biofilm formation with copious extracellular fibrils. The polypeptide is Functional amyloid subunit FapB (Pseudomonas fluorescens).